The chain runs to 119 residues: Vitelline membrane protein Vm34Ca (119 aa).

An N-terminal signal peptide occupies residues 1–19 (MKCIAIVSTICLLAAFVAA). The region spanning 69–106 (SIPAPPCPKNYLFSCQPNLAPVPCSAPAPSYGSAGAYS) is the VM domain.

This sequence belongs to the vitelline membrane protein family. As to expression, follicle cells.

It localises to the secreted. Its function is as follows. Major early eggshell protein. The sequence is that of Vitelline membrane protein Vm34Ca (Vm34Ca) from Drosophila melanogaster (Fruit fly).